Here is a 508-residue protein sequence, read N- to C-terminus: Bifunctional purine biosynthesis protein PurH (508 aa).

In terms of domain architecture, MGS-like spans 1–145 (MTKRALISVS…KNHQYVTVIV (145 aa)).

This sequence belongs to the PurH family.

It catalyses the reaction (6R)-10-formyltetrahydrofolate + 5-amino-1-(5-phospho-beta-D-ribosyl)imidazole-4-carboxamide = 5-formamido-1-(5-phospho-D-ribosyl)imidazole-4-carboxamide + (6S)-5,6,7,8-tetrahydrofolate. It carries out the reaction IMP + H2O = 5-formamido-1-(5-phospho-D-ribosyl)imidazole-4-carboxamide. The protein operates within purine metabolism; IMP biosynthesis via de novo pathway; 5-formamido-1-(5-phospho-D-ribosyl)imidazole-4-carboxamide from 5-amino-1-(5-phospho-D-ribosyl)imidazole-4-carboxamide (10-formyl THF route): step 1/1. It participates in purine metabolism; IMP biosynthesis via de novo pathway; IMP from 5-formamido-1-(5-phospho-D-ribosyl)imidazole-4-carboxamide: step 1/1. The polypeptide is Bifunctional purine biosynthesis protein PurH (Lysinibacillus sphaericus (strain C3-41)).